Reading from the N-terminus, the 827-residue chain is uncharacterized protein (827 aa).

This is an uncharacterized protein from Methanocaldococcus jannaschii (strain ATCC 43067 / DSM 2661 / JAL-1 / JCM 10045 / NBRC 100440) (Methanococcus jannaschii).